The primary structure comprises 70 residues: Protease inhibitor HPI (70 aa).

At alanine 2 the chain carries N-acetylalanine. Cysteine 5 carries the post-translational modification S-glutathionyl cysteine; alternate.

This sequence belongs to the protease inhibitor I13 (potato type I serine protease inhibitor) family. In terms of assembly, monomer and homodimer; disulfide-linked. Post-translationally, occurs in 3 forms that differ in the modification of Cys-5, HPI-1 forms a homodimer through a disulfide bond, HPI-2a is modified by glutathionylation, and HPI-2b is covalently modified by addition of an unidentified adduct but not by a disulfide linkage.

In terms of biological role, inhibitor of serine proteases, strongly inhibits subtilisin A and weakly inhibits trypsin. Does not inhibit chymotrypsin, papain, pepsin, pronase E, protease type XIII and thermolysin. HPI-1 inhibits subtilisin A with an Ki of 0.21 nM. HPI-2a inhibits subtilisin A with an Ki of 0.08 nM. HPI-2b inhibits subtilisin A with an Ki of 0.1 nM. This is Protease inhibitor HPI from Hevea brasiliensis (Para rubber tree).